Here is a 371-residue protein sequence, read N- to C-terminus: N-acetyldiaminopimelate deacetylase (371 aa).

Aspartate 68 is a catalytic residue. Glutamate 127 (proton acceptor) is an active-site residue.

This sequence belongs to the peptidase M20A family. N-acetyldiaminopimelate deacetylase subfamily.

The catalysed reaction is N-acetyl-(2S,6S)-2,6-diaminopimelate + H2O = (2S,6S)-2,6-diaminopimelate + acetate. It participates in amino-acid biosynthesis; L-lysine biosynthesis via DAP pathway; LL-2,6-diaminopimelate from (S)-tetrahydrodipicolinate (acetylase route): step 3/3. In terms of biological role, catalyzes the conversion of N-acetyl-diaminopimelate to diaminopimelate and acetate. In Listeria welshimeri serovar 6b (strain ATCC 35897 / DSM 20650 / CCUG 15529 / CIP 8149 / NCTC 11857 / SLCC 5334 / V8), this protein is N-acetyldiaminopimelate deacetylase.